The following is a 127-amino-acid chain: Protein translocase subunit SecE (127 aa).

Helical transmembrane passes span 17–37, 41–61, and 95–115; these read VKWISISIFFILSFFINMCFY, LFIRIFIISCLMLCAIGTMIY, and FIVISVTIFISFILWSIDSVI.

The protein belongs to the SecE/SEC61-gamma family. Component of the Sec protein translocase complex. Heterotrimer consisting of SecY, SecE and SecG subunits. The heterotrimers can form oligomers, although 1 heterotrimer is thought to be able to translocate proteins. Interacts with the ribosome. Interacts with SecDF, and other proteins may be involved. Interacts with SecA.

It localises to the cell inner membrane. Its function is as follows. Essential subunit of the Sec protein translocation channel SecYEG. Clamps together the 2 halves of SecY. May contact the channel plug during translocation. This chain is Protein translocase subunit SecE, found in Buchnera aphidicola subsp. Acyrthosiphon pisum (strain APS) (Acyrthosiphon pisum symbiotic bacterium).